We begin with the raw amino-acid sequence, 430 residues long: uncharacterized protein (430 aa).

The next 12 membrane-spanning stretches (helical) occupy residues 18–38 (LFLL…NTFV), 49–69 (FIDL…TFYL), 80–100 (VFIL…VLLA), 109–129 (VLIG…FNVL), 145–165 (FMGI…GFVI), 175–195 (TVIF…SFFL), 235–255 (IFVF…LALG), 256–276 (TFGL…SRLI), 285–305 (ILLG…HMSF), 307–327 (TLLT…VPYV), 353–373 (MFLN…VALL), and 377–397 (VGIP…YYFV). Residues 407-430 (GENETMEEDGQKRVTEPTLLKGER) form a disordered region. Over residues 415 to 430 (DGQKRVTEPTLLKGER) the composition is skewed to basic and acidic residues.

The protein resides in the cell membrane. This is an uncharacterized protein from Bacillus subtilis (strain 168).